We begin with the raw amino-acid sequence, 227 residues long: Orotidine 5'-phosphate decarboxylase (227 aa).

Residues Asp8, Lys30, 59-68 (DLKLYDIPYT), Thr118, Arg178, Gln187, Gly207, and Arg208 contribute to the substrate site. Catalysis depends on Lys61, which acts as the Proton donor.

The protein belongs to the OMP decarboxylase family. Type 1 subfamily. Homodimer.

It carries out the reaction orotidine 5'-phosphate + H(+) = UMP + CO2. Its pathway is pyrimidine metabolism; UMP biosynthesis via de novo pathway; UMP from orotate: step 2/2. In terms of biological role, catalyzes the decarboxylation of orotidine 5'-monophosphate (OMP) to uridine 5'-monophosphate (UMP). The chain is Orotidine 5'-phosphate decarboxylase from Helicobacter pylori (strain P12).